The primary structure comprises 202 residues: Small ribosomal subunit protein uS4c (202 aa).

Positions 90-153 (MRLDNVIFRL…KSEAIISKNI (64 aa)) constitute an S4 RNA-binding domain.

This sequence belongs to the universal ribosomal protein uS4 family. As to quaternary structure, part of the 30S ribosomal subunit. Contacts protein S5. The interaction surface between S4 and S5 is involved in control of translational fidelity.

It is found in the plastid. The protein localises to the chloroplast. Its function is as follows. One of the primary rRNA binding proteins, it binds directly to 16S rRNA where it nucleates assembly of the body of the 30S subunit. In terms of biological role, with S5 and S12 plays an important role in translational accuracy. The polypeptide is Small ribosomal subunit protein uS4c (rps4) (Cyathophorum bulbosum (Moss)).